Consider the following 122-residue polypeptide: Probable DNA-directed RNA polymerase II subunit RPB11 (122 aa).

It belongs to the archaeal Rpo11/eukaryotic RPB11/RPC19 RNA polymerase subunit family. As to quaternary structure, component of the RNA polymerase II (Pol II) complex consisting of 12 subunits.

The protein localises to the nucleus. DNA-dependent RNA polymerase catalyzes the transcription of DNA into RNA using the four ribonucleoside triphosphates as substrates. Component of RNA polymerase II which synthesizes mRNA precursors and many functional non-coding RNAs. Pol II is the central component of the basal RNA polymerase II transcription machinery. It is composed of mobile elements that move relative to each other. RPB11 is part of the core element with the central large cleft. In Caenorhabditis elegans, this protein is Probable DNA-directed RNA polymerase II subunit RPB11 (rpb-11).